The following is a 363-amino-acid chain: L-serine dehydratase/L-threonine deaminase (363 aa).

A2 carries the N-acetylalanine modification. K41 carries the N6-(pyridoxal phosphate)lysine modification. Residues 74 to 98 (RGRSHSGDEQPHVRSQALLPDTPSP) form a disordered region. P164 provides a ligand contact to pyridoxal 5'-phosphate.

It belongs to the serine/threonine dehydratase family. Homodimer. Requires pyridoxal 5'-phosphate as cofactor. In terms of tissue distribution, predominantly expressed in the periportal regions of the liver.

Its subcellular location is the cytoplasm. The enzyme catalyses L-serine = pyruvate + NH4(+). It carries out the reaction L-threonine = 2-oxobutanoate + NH4(+). It functions in the pathway carbohydrate biosynthesis; gluconeogenesis. Functionally, catalyzes the pyridoxal-phosphate-dependent dehydrative deamination of L-threonine and L-serine to ammonia and alpha-ketobutyrate and pyruvate, respectively. This chain is L-serine dehydratase/L-threonine deaminase (Sds), found in Rattus norvegicus (Rat).